Reading from the N-terminus, the 227-residue chain is UMP-CMP kinase (227 aa).

35–40 is a binding site for ATP; it reads GAGKGT. Residues 55 to 85 form an NMP region; sequence SAGDLLRAEQHREGSEYGQLIQTCIKEGSIV. Residues arginine 61, 83 to 85, 122 to 125, and glutamine 129 contribute to the a ribonucleoside 5'-phosphate site; these read SIV and GFPR. The interval 159-169 is LID; that stretch reads ERGKTSGREDD. Arginine 160 contributes to the ATP binding site. Residues arginine 166 and arginine 177 each coordinate a ribonucleoside 5'-phosphate. Residue valine 205 participates in ATP binding.

Belongs to the adenylate kinase family. UMP-CMP kinase subfamily. In terms of assembly, monomer. It depends on Mg(2+) as a cofactor.

The protein localises to the cytoplasm. The protein resides in the nucleus. It catalyses the reaction UMP + ATP = UDP + ADP. In terms of biological role, catalyzes the phosphorylation of pyrimidine nucleoside monophosphates at the expense of ATP. Plays an important role in de novo pyrimidine nucleotide biosynthesis. Has preference for UMP and CMP as phosphate acceptors, but can also use AMP and dCMP to a lesser extent. May play a role during the formation of basidiospores in the gill tissue. The chain is UMP-CMP kinase (uck1) from Lentinula edodes (Shiitake mushroom).